A 164-amino-acid chain; its full sequence is ATP synthase subunit b (164 aa).

Residues 6 to 26 traverse the membrane as a helical segment; sequence GELVGNFILVTGSVIVLLLLI.

This sequence belongs to the ATPase B chain family. As to quaternary structure, F-type ATPases have 2 components, F(1) - the catalytic core - and F(0) - the membrane proton channel. F(1) has five subunits: alpha(3), beta(3), gamma(1), delta(1), epsilon(1). F(0) has three main subunits: a(1), b(2) and c(10-14). The alpha and beta chains form an alternating ring which encloses part of the gamma chain. F(1) is attached to F(0) by a central stalk formed by the gamma and epsilon chains, while a peripheral stalk is formed by the delta and b chains.

Its subcellular location is the cell membrane. In terms of biological role, f(1)F(0) ATP synthase produces ATP from ADP in the presence of a proton or sodium gradient. F-type ATPases consist of two structural domains, F(1) containing the extramembraneous catalytic core and F(0) containing the membrane proton channel, linked together by a central stalk and a peripheral stalk. During catalysis, ATP synthesis in the catalytic domain of F(1) is coupled via a rotary mechanism of the central stalk subunits to proton translocation. Its function is as follows. Component of the F(0) channel, it forms part of the peripheral stalk, linking F(1) to F(0). The sequence is that of ATP synthase subunit b from Streptococcus pyogenes serotype M1.